Reading from the N-terminus, the 788-residue chain is uncharacterized protein (788 aa).

Residues 485-693 (EMITTAWIKL…IYIVLKSYKG (209 aa)) enclose the Adrift-type SAM-dependent 2'-O-MTase domain. Gly-521 and Asp-604 together coordinate S-adenosyl-L-methionine. Lys-645 acts as the Proton acceptor in catalysis.

This is an uncharacterized protein from Acanthamoeba polyphaga (Amoeba).